The following is a 669-amino-acid chain: DNA ligase (669 aa).

NAD(+) contacts are provided by residues 32-36 (DAEYD), 81-82 (SL), and E113. K115 (N6-AMP-lysine intermediate) is an active-site residue. The NAD(+) site is built by R136, E173, K290, and K314. Zn(2+) contacts are provided by C408, C411, C426, and C432. Residues 592–669 (AVDSALAGKI…DEQALIEFLK (78 aa)) enclose the BRCT domain.

Belongs to the NAD-dependent DNA ligase family. LigA subfamily. It depends on Mg(2+) as a cofactor. Mn(2+) is required as a cofactor.

The catalysed reaction is NAD(+) + (deoxyribonucleotide)n-3'-hydroxyl + 5'-phospho-(deoxyribonucleotide)m = (deoxyribonucleotide)n+m + AMP + beta-nicotinamide D-nucleotide.. In terms of biological role, DNA ligase that catalyzes the formation of phosphodiester linkages between 5'-phosphoryl and 3'-hydroxyl groups in double-stranded DNA using NAD as a coenzyme and as the energy source for the reaction. It is essential for DNA replication and repair of damaged DNA. The polypeptide is DNA ligase (Vibrio cholerae serotype O1 (strain ATCC 39315 / El Tor Inaba N16961)).